We begin with the raw amino-acid sequence, 469 residues long: UDP-glycosyltransferase 43 (469 aa).

Residues serine 280, 345-346 (WV), 363-371 (HCGWNSILE), and 385-388 (YSEQ) contribute to the UDP-alpha-D-glucose site.

This sequence belongs to the UDP-glycosyltransferase family.

Its activity is regulated as follows. Inhibited by Cu(2+) or Zn(2+). Glycosyltransferase that catalyzes the C-glucosylation of daidzein to puerarin. Shows activity with the isoflavones daidzein and genistein, but has no activity towards flavonoids such as 2-hydroxynaringenin. Can use UDP-glucose, but not UDP-galactose or UDP-glucuronic acid as sugar donor. Does not require bivalent cations for activity. In Pueraria montana var. lobata (Kudzu vine), this protein is UDP-glycosyltransferase 43.